A 223-amino-acid chain; its full sequence is Small ribosomal subunit protein uS3 (223 aa).

The 69-residue stretch at 40–108 (IRELVHRELP…KVHLNIQEIR (69 aa)) folds into the KH type-2 domain.

This sequence belongs to the universal ribosomal protein uS3 family. Part of the 30S ribosomal subunit. Forms a tight complex with proteins S10 and S14.

Functionally, binds the lower part of the 30S subunit head. Binds mRNA in the 70S ribosome, positioning it for translation. The chain is Small ribosomal subunit protein uS3 from Thermomicrobium roseum (strain ATCC 27502 / DSM 5159 / P-2).